The sequence spans 363 residues: Cytochrome b (363 aa).

4 helical membrane passes run 23–43 (VGFILGILLILQILSGLLLTF), 67–89 (WFVRLYHSVGVSFYFFFMFIHII), 102–122 (SWYSGIVILILSIVIAFTGYV), and 164–184 (FFILHFVLPAVVLVIVLLHLY). Heme b is bound by residues His73 and His87. Positions 168 and 182 each coordinate heme b. His187 provides a ligand contact to a ubiquinone. Helical transmembrane passes span 210–230 (ILFSDVKFLVIISMFIGPQVG), 271–291 (VFPTKVSGLVAMVVVLKLLII), 309–329 (RVWTTTSVPLVPALFLLGCIG), and 332–352 (VINLDLIIIGIYGVLLSTTFV).

This sequence belongs to the cytochrome b family. As to quaternary structure, the main subunits of complex b-c1 are: cytochrome b, cytochrome c1 and the Rieske protein. Heme b is required as a cofactor.

The protein localises to the mitochondrion inner membrane. Component of the ubiquinol-cytochrome c reductase complex (complex III or cytochrome b-c1 complex) that is part of the mitochondrial respiratory chain. The b-c1 complex mediates electron transfer from ubiquinol to cytochrome c. Contributes to the generation of a proton gradient across the mitochondrial membrane that is then used for ATP synthesis. In Theileria parva (East coast fever infection agent), this protein is Cytochrome b (MT-CYB).